The sequence spans 474 residues: Tumor necrosis factor receptor superfamily member 1B (474 aa).

Residues 1–22 (MAPAALWVALVFELQLWATGHT) form the signal peptide. Residues 23 to 258 (VPAQVVLTPY…PIIEQSTKGG (236 aa)) lie on the Extracellular side of the membrane. T30 carries O-linked (GalNAc...) threonine glycosylation. TNFR-Cys repeat units lie at residues 39–77 (ECQI…TVCA), 78–119 (DCEA…NRVC), 120–164 (ACEA…VLCK), and 165–203 (ACAP…AVCA). 10 disulfide bridges follow: C40/C54, C55/C68, C58/C76, C79/C94, C97/C111, C101/C119, C121/C127, C136/C145, C139/C163, and C166/C181. Residue N69 is glycosylated (N-linked (GlcNAc...) asparagine). N195 carries an N-linked (GlcNAc...) asparagine glycan. T208 and T224 each carry an O-linked (GalNAc...) threonine glycan. The segment at 220–243 (QPEPTRSQPLDQEPGPSQTPSILT) is disordered. Residues 259-288 (ISLPIGLIVGVTSLGLLMLGLVNCIILVQR) traverse the membrane as a helical segment. At 289–474 (KKKPSCLQRD…WFDQIAVKVA (186 aa)) the chain is on the cytoplasmic side. Disordered regions lie at residues 295–314 (LQRD…DAVG), 321–378 (LTTA…GSHG), and 397–463 (SQCS…PSQA). A compositionally biased stretch (basic and acidic residues) spans 297 to 310 (RDAKVPHVPDEKSQ). Composition is skewed to low complexity over residues 324-338 (APSS…SASA) and 363-378 (ARAS…GSHG). Position 331 is a phosphoserine (S331). Residues 429-442 (ECPSQSPCETTETL) show a composition bias toward polar residues.

As to quaternary structure, binds to TRAF2. Interacts with BMX. Interacts (activated form) with XPNPEP3.

The protein localises to the membrane. Receptor with high affinity for TNFSF2/TNF-alpha and approximately 5-fold lower affinity for homotrimeric TNFSF1/lymphotoxin-alpha. The TRAF1/TRAF2 complex recruits the apoptotic suppressors BIRC2 and BIRC3 to TNFRSF1B/TNFR2. The sequence is that of Tumor necrosis factor receptor superfamily member 1B (Tnfrsf1b) from Mus musculus (Mouse).